We begin with the raw amino-acid sequence, 525 residues long: Asparagine synthetase [glutamine-hydrolyzing] (525 aa).

Cys-2 acts as the For GATase activity in catalysis. In terms of domain architecture, Glutamine amidotransferase type-2 spans Cys-2–Gly-185. L-glutamine contacts are provided by residues Arg-50 to Ile-54, Asn-75 to Glu-77, and Asp-98. The Asparagine synthetase domain occupies Pro-193–Cys-517. Residues Leu-231, Val-267, and Ser-341–Gly-342 each bind ATP.

It catalyses the reaction L-aspartate + L-glutamine + ATP + H2O = L-asparagine + L-glutamate + AMP + diphosphate + H(+). The protein operates within amino-acid biosynthesis; L-asparagine biosynthesis; L-asparagine from L-aspartate (L-Gln route): step 1/1. Functionally, could play a role in remobilization of nitrogen in flowers during senescence. This chain is Asparagine synthetase [glutamine-hydrolyzing] (AND1), found in Sandersonia aurantiaca (Christmas-bells).